A 104-amino-acid chain; its full sequence is SOSS complex subunit C (104 aa).

An N-acetylalanine modification is found at Ala2.

It belongs to the SOSS-C family. As to quaternary structure, component of the SOSS complex, composed of SOSS-B (SOSS-B1/NABP2 or SOSS-B2/NABP1), SOSS-A/INTS3 and SOSS-C/INIP. SOSS complexes containing SOSS-B1/NABP2 are more abundant than complexes containing SOSS-B2/NABP1. Interacts with INTS3; the interaction is direct.

It localises to the nucleus. In terms of biological role, component of the SOSS complex, a multiprotein complex that functions downstream of the MRN complex to promote DNA repair and G2/M checkpoint. The SOSS complex associates with single-stranded DNA at DNA lesions and influences diverse endpoints in the cellular DNA damage response including cell-cycle checkpoint activation, recombinational repair and maintenance of genomic stability. Required for efficient homologous recombination-dependent repair of double-strand breaks (DSBs) and ATM-dependent signaling pathways. The sequence is that of SOSS complex subunit C (INIP) from Bos taurus (Bovine).